Here is a 204-residue protein sequence, read N- to C-terminus: N-(5'-phosphoribosyl)anthranilate isomerase (204 aa).

It belongs to the TrpF family.

The catalysed reaction is N-(5-phospho-beta-D-ribosyl)anthranilate = 1-(2-carboxyphenylamino)-1-deoxy-D-ribulose 5-phosphate. The protein operates within amino-acid biosynthesis; L-tryptophan biosynthesis; L-tryptophan from chorismate: step 3/5. The protein is N-(5'-phosphoribosyl)anthranilate isomerase of Bacillus thuringiensis (strain Al Hakam).